Consider the following 133-residue polypeptide: Transmembrane protein 60 (133 aa).

4 helical membrane passes run 5 to 25, 35 to 55, 78 to 98, and 110 to 130; these read LAQRVLLTWLFTLLFLIMLVL, WFLIFIPVWIFDTILLVMLIV, AWYLIAMLLKLAFCLALCAKL, and FIPLWALLAGALTELGYNVFF.

The protein resides in the membrane. The sequence is that of Transmembrane protein 60 (Tmem60) from Mus musculus (Mouse).